Reading from the N-terminus, the 66-residue chain is Large ribosomal subunit protein bL35 (66 aa).

Residues 1-26 (MPKMKTHRGSAKRFKKTASGKLKRGH) are compositionally biased toward basic residues. Positions 1–29 (MPKMKTHRGSAKRFKKTASGKLKRGHAYT) are disordered.

This sequence belongs to the bacterial ribosomal protein bL35 family.

The polypeptide is Large ribosomal subunit protein bL35 (Geobacillus kaustophilus (strain HTA426)).